Consider the following 490-residue polypeptide: Protein lag-3 (490 aa).

Disordered stretches follow at residues 18-55 (PSVA…EDEP), 105-155 (EDEE…PTSE), 213-235 (SSAD…SPAE), 307-362 (SSSE…MQRI), and 391-490 (QQQQ…ANIN). Basic and acidic residues predominate over residues 105-119 (EDEERKRVEQQKNKE). Residues 122–138 (NASTSAPTSSRNGGQSV) show a composition bias toward polar residues. Residues 307-318 (SSSESPTKQSPM) are compositionally biased toward polar residues. 3 stretches are compositionally biased toward low complexity: residues 341 to 359 (QLQQ…QQEM), 391 to 404 (QQQQ…HHQM), and 413 to 456 (QAHQ…HHQM).

As to quaternary structure, component of a complex consisting of at least a lin-12/Notch intracellular domain (NICD), lag-1, and lag-3. Interacts with a NICD of lin-12/Notch or glp-1/Notch; the interactions are direct. As to expression, expressed in the progenitor zone and the early pachytene region of the hermaphrodite gonad.

It is found in the nucleus. In terms of biological role, glp-1/Notch and lin-12/Notch proteins promote signaling by recruiting lag-3 to target promoters, where it functions as a transcriptional activator, probably as part of a complex with a Notch intracellular domain (NICD) and the transcription regulator lag-1. Involved in the p53-mediated germ-cell apoptotic response to DNA damage, perhaps acting as a transcriptional activator. May regulate phosphatase lip-1 mRNA transcription downstream of glp-1. The protein is Protein lag-3 (sel-8) of Caenorhabditis elegans.